We begin with the raw amino-acid sequence, 320 residues long: ATP-dependent 6-phosphofructokinase (320 aa).

Gly12 serves as a coordination point for ATP. ADP is bound at residue 22–26 (RGVVR). ATP contacts are provided by residues 73–74 (RF) and 103–106 (GDGS). Asp104 provides a ligand contact to Mg(2+). 126-128 (TID) contacts substrate. Asp128 functions as the Proton acceptor in the catalytic mechanism. Arg155 lines the ADP pocket. Residues Arg163 and 170–172 (MGR) contribute to the substrate site. Residues 186–188 (GCE), Lys212, and 214–216 (KKH) contribute to the ADP site. Substrate-binding positions include Glu223, Arg244, and 250–253 (HIQR).

Belongs to the phosphofructokinase type A (PFKA) family. ATP-dependent PFK group I subfamily. Prokaryotic clade 'B1' sub-subfamily. In terms of assembly, homotetramer. Mg(2+) is required as a cofactor.

The protein resides in the cytoplasm. It carries out the reaction beta-D-fructose 6-phosphate + ATP = beta-D-fructose 1,6-bisphosphate + ADP + H(+). It functions in the pathway carbohydrate degradation; glycolysis; D-glyceraldehyde 3-phosphate and glycerone phosphate from D-glucose: step 3/4. Its activity is regulated as follows. Allosterically activated by ADP and other diphosphonucleosides, and allosterically inhibited by phosphoenolpyruvate. Catalyzes the phosphorylation of D-fructose 6-phosphate to fructose 1,6-bisphosphate by ATP, the first committing step of glycolysis. This is ATP-dependent 6-phosphofructokinase from Photobacterium profundum (strain SS9).